Consider the following 138-residue polypeptide: Phosphoribosyl-AMP cyclohydrolase (138 aa).

Aspartate 84 serves as a coordination point for Mg(2+). A Zn(2+)-binding site is contributed by cysteine 85. 2 residues coordinate Mg(2+): aspartate 86 and aspartate 88. 2 residues coordinate Zn(2+): cysteine 102 and cysteine 109.

Belongs to the PRA-CH family. In terms of assembly, homodimer. It depends on Mg(2+) as a cofactor. Requires Zn(2+) as cofactor.

The protein localises to the cytoplasm. The enzyme catalyses 1-(5-phospho-beta-D-ribosyl)-5'-AMP + H2O = 1-(5-phospho-beta-D-ribosyl)-5-[(5-phospho-beta-D-ribosylamino)methylideneamino]imidazole-4-carboxamide. It participates in amino-acid biosynthesis; L-histidine biosynthesis; L-histidine from 5-phospho-alpha-D-ribose 1-diphosphate: step 3/9. Functionally, catalyzes the hydrolysis of the adenine ring of phosphoribosyl-AMP. The protein is Phosphoribosyl-AMP cyclohydrolase of Burkholderia orbicola (strain MC0-3).